A 289-amino-acid chain; its full sequence is Protease HtpX (289 aa).

A run of 2 helical transmembrane segments spans residues 4–24 (IMLFLATNLAVVLVLSVVLNI) and 36–56 (LSGLLVMAAVFGFGGAFISLM). Histidine 143 contributes to the Zn(2+) binding site. Residue glutamate 144 is part of the active site. Histidine 147 is a binding site for Zn(2+). A run of 2 helical transmembrane segments spans residues 158 to 178 (LMQGVVNTFVIFLSRFIANIV) and 192 to 212 (MVYFGVSMVLELVFGFLASFL). Glutamate 221 contacts Zn(2+).

It belongs to the peptidase M48B family. Zn(2+) is required as a cofactor.

It localises to the cell inner membrane. The polypeptide is Protease HtpX (Vibrio campbellii (strain ATCC BAA-1116)).